Reading from the N-terminus, the 107-residue chain is UPF0145 protein YbjQ (107 aa).

Belongs to the UPF0145 family.

The sequence is that of UPF0145 protein YbjQ from Escherichia coli O139:H28 (strain E24377A / ETEC).